The primary structure comprises 953 residues: MDYKKSLNLPDTPFPMRGDLAKREPGWVAEWEETQVYQAIRAASRGRPRFVLHDGPPYANGDIHIGHAVNKILKDIIVKSRNMAGYDAHYVPGWDCHGMPIEIQIEKKYGKHLPVTEVQSKARAYALEQIDRQRKDFKRLGVLGDWHNPYLTMNFSNEADEIRVLGRILEKGYVFRGLKPVNWCFDCGSALAEAEVEYADRVDPAIDVAFPFTDRGALARAFGLDEVDAGAIVIWTTTPWTIPSNQALNVHPEIDYALVRVTPAPVHGPLLLLAQERVEPSLKAWGLEGEIIATAKGEALEGLRFRHPLAAAAQGYDRTSPIYLGDYVTLDTGTGVVHSAPAYGIEDFVSCKAHGLADSDILGPVMGDGKFVDSLPLFGGLSIWDANPRIVEALKLADSLMLVQKLSHSYMHCWRHKTPVIYRATSQWFAGMDVKPRDGGPSLRESALAGIDATAFYPAWGRARLHAMIANRPDWTLSRQRQWGVPMAFFVHKETGELHPRTVELLEQIAQRVEKGGIEAWQSLDPRELLGDEAELYEKNRDTLDVWFDSGSTHATVLGGKDGVLGGSHGAELAWPADLYLEGSDQHRGWFHSSLLTGCMLYGHPPYKGLLTHGFVVDGQGRKMSKSVGNVIAPQKVSDSLGAEILRLWVASTDYSGELSISDEILKRVVESYRRIRNTLRFLLANVADFDAVGQAVPYGELFEIDRYALAMTAQMQAEVQGHYERYDFHPAVSRLQTFCSEDLGAFYLDILKDRLYTTAAGSAARRSAQTALLDITQTLLKLMAPILSFTAEEAWKILAGSALAKQADAPRVTIFTEVYHALPPFADGEALTAKWTRLRAIRAEVQRKLEEVRSAGAIGSSLQAEVDLYANAADHDILASLGDDLRFVLIVSRATVHADADDLRIEIAASGHKKCERCWHWRPDVGQDADHPEICGRCVSNLFGAGEPRTRA.

The 'HIGH' region signature appears at 57–67; it reads PYANGDIHIGH. Glutamate 582 provides a ligand contact to L-isoleucyl-5'-AMP. The short motif at 623–627 is the 'KMSKS' region element; the sequence is KMSKS. Lysine 626 contributes to the ATP binding site. The Zn(2+) site is built by cysteine 916, cysteine 919, cysteine 936, and cysteine 939.

The protein belongs to the class-I aminoacyl-tRNA synthetase family. IleS type 1 subfamily. As to quaternary structure, monomer. Zn(2+) serves as cofactor.

The protein localises to the cytoplasm. The catalysed reaction is tRNA(Ile) + L-isoleucine + ATP = L-isoleucyl-tRNA(Ile) + AMP + diphosphate. Its function is as follows. Catalyzes the attachment of isoleucine to tRNA(Ile). As IleRS can inadvertently accommodate and process structurally similar amino acids such as valine, to avoid such errors it has two additional distinct tRNA(Ile)-dependent editing activities. One activity is designated as 'pretransfer' editing and involves the hydrolysis of activated Val-AMP. The other activity is designated 'posttransfer' editing and involves deacylation of mischarged Val-tRNA(Ile). The protein is Isoleucine--tRNA ligase of Bordetella pertussis (strain Tohama I / ATCC BAA-589 / NCTC 13251).